We begin with the raw amino-acid sequence, 513 residues long: 2,3-bisphosphoglycerate-independent phosphoglycerate mutase (513 aa).

Positions 14 and 64 each coordinate Mn(2+). The active-site Phosphoserine intermediate is the S64. Substrate-binding positions include H125, 155–156, R187, R193, 259–262, and K333; these read RD and RADR. Positions 400, 404, 441, 442, and 460 each coordinate Mn(2+).

Belongs to the BPG-independent phosphoglycerate mutase family. As to quaternary structure, monomer. Requires Mn(2+) as cofactor.

The catalysed reaction is (2R)-2-phosphoglycerate = (2R)-3-phosphoglycerate. Its pathway is carbohydrate degradation; glycolysis; pyruvate from D-glyceraldehyde 3-phosphate: step 3/5. Its function is as follows. Catalyzes the interconversion of 2-phosphoglycerate and 3-phosphoglycerate. This Pseudomonas fluorescens (strain ATCC BAA-477 / NRRL B-23932 / Pf-5) protein is 2,3-bisphosphoglycerate-independent phosphoglycerate mutase.